Consider the following 422-residue polypeptide: UDP-N-acetylglucosamine 1-carboxyvinyltransferase (422 aa).

22 to 23 (KN) contacts phosphoenolpyruvate. Arg94 is a UDP-N-acetyl-alpha-D-glucosamine binding site. Catalysis depends on Cys118, which acts as the Proton donor. 2-(S-cysteinyl)pyruvic acid O-phosphothioketal is present on Cys118. UDP-N-acetyl-alpha-D-glucosamine-binding positions include 123–127 (RPVDL), 163–166 (KVSV), Asp308, and Ile330.

This sequence belongs to the EPSP synthase family. MurA subfamily.

It is found in the cytoplasm. It carries out the reaction phosphoenolpyruvate + UDP-N-acetyl-alpha-D-glucosamine = UDP-N-acetyl-3-O-(1-carboxyvinyl)-alpha-D-glucosamine + phosphate. It participates in cell wall biogenesis; peptidoglycan biosynthesis. Its function is as follows. Cell wall formation. Adds enolpyruvyl to UDP-N-acetylglucosamine. This Yersinia enterocolitica serotype O:8 / biotype 1B (strain NCTC 13174 / 8081) protein is UDP-N-acetylglucosamine 1-carboxyvinyltransferase.